Reading from the N-terminus, the 295-residue chain is 4-hydroxy-tetrahydrodipicolinate synthase (295 aa).

Threonine 46 is a pyruvate binding site. Tyrosine 134 functions as the Proton donor/acceptor in the catalytic mechanism. Lysine 162 (schiff-base intermediate with substrate) is an active-site residue. Isoleucine 205 serves as a coordination point for pyruvate.

It belongs to the DapA family. Homotetramer; dimer of dimers.

The protein localises to the cytoplasm. It catalyses the reaction L-aspartate 4-semialdehyde + pyruvate = (2S,4S)-4-hydroxy-2,3,4,5-tetrahydrodipicolinate + H2O + H(+). The protein operates within amino-acid biosynthesis; L-lysine biosynthesis via DAP pathway; (S)-tetrahydrodipicolinate from L-aspartate: step 3/4. Its function is as follows. Catalyzes the condensation of (S)-aspartate-beta-semialdehyde [(S)-ASA] and pyruvate to 4-hydroxy-tetrahydrodipicolinate (HTPA). This chain is 4-hydroxy-tetrahydrodipicolinate synthase, found in Anaeromyxobacter dehalogenans (strain 2CP-1 / ATCC BAA-258).